Consider the following 365-residue polypeptide: Peptide chain release factor 1 (365 aa).

Gln-242 bears the N5-methylglutamine mark.

It belongs to the prokaryotic/mitochondrial release factor family. In terms of processing, methylated by PrmC. Methylation increases the termination efficiency of RF1.

It localises to the cytoplasm. In terms of biological role, peptide chain release factor 1 directs the termination of translation in response to the peptide chain termination codons UAG and UAA. The chain is Peptide chain release factor 1 from Fusobacterium nucleatum subsp. nucleatum (strain ATCC 25586 / DSM 15643 / BCRC 10681 / CIP 101130 / JCM 8532 / KCTC 2640 / LMG 13131 / VPI 4355).